Reading from the N-terminus, the 424-residue chain is Protein FAM43A (424 aa).

Residues 261–297 (QQEEELQEEEEEHLEDCLEEEEEEDGVGDGDPAEEEA) are compositionally biased toward acidic residues. Disordered stretches follow at residues 261–299 (QQEE…EAEA) and 382–424 (LLSG…PYSG). A compositionally biased stretch (low complexity) spans 382 to 394 (LLSGESTGSESSI). The segment covering 405–418 (SPGNPSGPADSTSL) has biased composition (polar residues).

Belongs to the FAM43 family.

This chain is Protein FAM43A (Fam43a), found in Mus musculus (Mouse).